A 247-amino-acid chain; its full sequence is MNIIPCSIKTLKGLYDISGVEVGQHFYWQIGGFQIHAQVLITSWVVITILLGSVIIAVRNPQTIPTDGQNFFEYVLEFIRDLSKTQIGEEYGPWVPFIGTMFLFIFVSNWSGALLPWKIIQLPHGELAAPTNDINTTVALALLTSAAYFYAGLSKKGLSYFEKYIKPTPILLPINILEDFTKPLSLSFRLFGNILADELVVVVLVSLVPLVVPIPVMFLGLFTSGIQALIFATLAAAYIGESMEGHH.

The next 5 membrane-spanning stretches (helical) occupy residues Q38 to V58, V95 to L115, I134 to S154, L199 to L219, and G220 to G240.

Belongs to the ATPase A chain family. F-type ATPases have 2 components, CF(1) - the catalytic core - and CF(0) - the membrane proton channel. CF(1) has five subunits: alpha(3), beta(3), gamma(1), delta(1), epsilon(1). CF(0) has four main subunits: a, b, b' and c.

Its subcellular location is the plastid. It is found in the chloroplast thylakoid membrane. Its function is as follows. Key component of the proton channel; it plays a direct role in the translocation of protons across the membrane. This Oryza sativa subsp. indica (Rice) protein is ATP synthase subunit a, chloroplastic.